Consider the following 92-residue polypeptide: Small ribosomal subunit protein uS19 (92 aa).

This sequence belongs to the universal ribosomal protein uS19 family.

Functionally, protein S19 forms a complex with S13 that binds strongly to the 16S ribosomal RNA. This chain is Small ribosomal subunit protein uS19, found in Gloeothece citriformis (strain PCC 7424) (Cyanothece sp. (strain PCC 7424)).